Consider the following 366-residue polypeptide: Galactose-1-phosphate uridylyltransferase (366 aa).

Position 27 is a phosphoserine (S27). Residues C54 and C57 each coordinate Zn(2+). UDP-alpha-D-glucose is bound by residues A63 and N79–D80. H124 is a binding site for Zn(2+). N169 contributes to the UDP-alpha-D-glucose binding site. H180 is a binding site for Zn(2+). H182 functions as the Tele-UMP-histidine intermediate in the catalytic mechanism. Q184 contributes to the UDP-alpha-D-glucose binding site. Fe cation is bound by residues E198, H297, H314, and H316. UDP-alpha-D-glucose contacts are provided by residues K329–V332 and F334–E335.

The protein belongs to the galactose-1-phosphate uridylyltransferase type 1 family. Homodimer. Zn(2+) serves as cofactor.

It carries out the reaction alpha-D-galactose 1-phosphate + UDP-alpha-D-glucose = alpha-D-glucose 1-phosphate + UDP-alpha-D-galactose. Its pathway is carbohydrate metabolism; galactose metabolism. In Saccharomyces cerevisiae (strain ATCC 204508 / S288c) (Baker's yeast), this protein is Galactose-1-phosphate uridylyltransferase (GAL7).